The primary structure comprises 336 residues: Ferredoxin--NADP reductase (336 aa).

FAD-binding residues include Asp-37, Gln-45, Tyr-50, Val-90, Phe-124, Asp-286, and Thr-327.

Belongs to the ferredoxin--NADP reductase type 2 family. In terms of assembly, homodimer. The cofactor is FAD.

The enzyme catalyses 2 reduced [2Fe-2S]-[ferredoxin] + NADP(+) + H(+) = 2 oxidized [2Fe-2S]-[ferredoxin] + NADPH. The chain is Ferredoxin--NADP reductase from Enterococcus faecalis (strain ATCC 700802 / V583).